The sequence spans 459 residues: Cysteine--tRNA ligase (459 aa).

Residue Cys-28 coordinates Zn(2+). The 'HIGH' region signature appears at 30 to 40 (VTVYDLCHIGH). The Zn(2+) site is built by Cys-209, His-234, and Glu-238. A 'KMSKS' region motif is present at residues 266-270 (KMSKS). Residue Lys-269 participates in ATP binding.

This sequence belongs to the class-I aminoacyl-tRNA synthetase family. Monomer. Zn(2+) is required as a cofactor.

Its subcellular location is the cytoplasm. The enzyme catalyses tRNA(Cys) + L-cysteine + ATP = L-cysteinyl-tRNA(Cys) + AMP + diphosphate. The polypeptide is Cysteine--tRNA ligase (Shewanella oneidensis (strain ATCC 700550 / JCM 31522 / CIP 106686 / LMG 19005 / NCIMB 14063 / MR-1)).